The primary structure comprises 362 residues: MEELSQALAGSFSVSQDLNSTAAPHPRLSQYKSKYSSLEQSERRRQLLELQKLKRLDYVNHARRLAEDDWTGMESEEEEEKKDDEEMDVDTGKELPKRYANQLMLSEWLIDVPSDLGQEWIVVVCPVGKRSLIVASQGLTSAYTKSGYCVNTFPSLLPGGNRRNSTTEKDYTILDCIYSEVNQTYYVLDVMCWRGHPFYDCQTDFRFYWLHSKLPEEEGLGEKTKRNPFKFVGLKNFPCTPESLCKVLSMDFPFEVDGLLFYHKQTHYSPGSTPLVGWLRPYMVSDVLGVAVPACPLTTKPEYAGYQLQQIIEHKKSKKEGIMGKLTPRASENGHYELEHLSTPKLKSPPQRPNHPESLMEN.

Position 1 is an N-acetylmethionine (methionine 1). 2 disordered regions span residues 1–40 (MEELSQALAGSFSVSQDLNSTAAPHPRLSQYKSKYSSLEQ) and 69–90 (DWTGMESEEEEEKKDDEEMDVD). The tract at residues 1 to 65 (MEELSQALAG…LDYVNHARRL (65 aa)) is necessary for interaction with KPNB1 and m3G-cap U1 and U5 snRNP import receptor activity. The tract at residues 1–160 (MEELSQALAG…NTFPSLLPGG (160 aa)) is necessary for interaction with XPO1. The region spanning 11–73 (SFSVSQDLNS…RLAEDDWTGM (63 aa)) is the IBB domain. The span at 12-22 (FSVSQDLNSTA) shows a compositional bias: polar residues. Acidic residues predominate over residues 69-89 (DWTGMESEEEEEKKDDEEMDV). Residue serine 75 is modified to Phosphoserine. The interaction with m3G-cap structure stretch occupies residues 128 to 130 (GKR). The necessary for binding to the m3G-cap structure stretch occupies residues 210–330 (LHSKLPEEEG…GIMGKLTPRA (121 aa)). Residues 319 to 362 (KEGIMGKLTPRASENGHYELEHLSTPKLKSPPQRPNHPESLMEN) form a disordered region. Positions 332 to 342 (ENGHYELEHLS) are enriched in basic and acidic residues.

Belongs to the snurportin family. In terms of assembly, component of an import snRNP complex composed of KPNB1, SNUPN, SMN1 and ZNF259. Component of a nuclear export receptor complex composed of KPNB1, Ran, SNUPN and XPO1. Found in a trimeric export complex with SNUPN, Ran and XPO1. Interacts (via IBB domain) with KPNB1; the interaction is direct. Interacts with DDX20, IPO7, SMN1, SNRPB and XPO1. Interacts directly with XPO1. Its interaction with XPO1 and binding to m3G-cap U snRNPs appears to be mutually exclusive. Can form homomers.

The protein localises to the nucleus. It localises to the cytoplasm. Its function is as follows. Functions as an U snRNP-specific nuclear import adapter. Involved in the trimethylguanosine (m3G)-cap-dependent nuclear import of U snRNPs. Binds specifically to the terminal m3G-cap U snRNAs. The sequence is that of Snurportin-1 (SNUPN) from Bos taurus (Bovine).